Consider the following 293-residue polypeptide: sn-glycerol-3-phosphate transport system permease protein UgpA (293 aa).

6 consecutive transmembrane segments (helical) span residues 10-30 (ILPYLLVAPQIILTVIFFFWP), 72-92 (VTVIFSVLTALVSMGLALLLA), 108-128 (MMIMPYAVAPAVAGMLWLFMF), 156-176 (MLLVVAAAAWKQISYNFLFFV), 204-224 (IVFPLLAPTTFFLLVVNTVYA), and 261-281 (LGSSAAQSVILMVIVIALTAF). Residues 66–282 (YLNSLKVTVI…VIVIALTAFQ (217 aa)) enclose the ABC transmembrane type-1 domain.

The protein belongs to the binding-protein-dependent transport system permease family. In terms of assembly, the complex is composed of two ATP-binding proteins (UgpC), two transmembrane proteins (UgpA and UgpE) and a solute-binding protein (UgpB).

Its subcellular location is the cell inner membrane. Its function is as follows. Part of the ABC transporter complex UgpBAEC involved in sn-glycerol-3-phosphate (G3P) import. Probably responsible for the translocation of the substrate across the membrane. The polypeptide is sn-glycerol-3-phosphate transport system permease protein UgpA (ugpA) (Agrobacterium fabrum (strain C58 / ATCC 33970) (Agrobacterium tumefaciens (strain C58))).